Consider the following 1456-residue polypeptide: DNA polymerase gamma, mitochondrial (1456 aa).

The transit peptide at 1-41 (MLTPVRCRTVPNATVATAARVLRRANLFSRYPRQLGHLRWD) directs the protein to the mitochondrion. Disordered stretches follow at residues 1200–1266 (APEM…SLDD) and 1308–1443 (AVTT…SWKP). Over residues 1204–1239 (AAVPSTSSESKSKASATTSTTTTENATASPSSSSNV) the composition is skewed to low complexity. Positions 1315–1325 (PEPPTNPPPVA) are enriched in pro residues. 2 stretches are compositionally biased toward low complexity: residues 1346-1371 (PKNP…TPKP) and 1411-1428 (TASV…ATAT).

It belongs to the DNA polymerase type-A family. It depends on Mg(2+) as a cofactor.

The protein resides in the mitochondrion. The enzyme catalyses DNA(n) + a 2'-deoxyribonucleoside 5'-triphosphate = DNA(n+1) + diphosphate. Functionally, involved in the replication of mitochondrial DNA. The protein is DNA polymerase gamma, mitochondrial (mip-1) of Neurospora crassa (strain ATCC 24698 / 74-OR23-1A / CBS 708.71 / DSM 1257 / FGSC 987).